The sequence spans 346 residues: N(4)-(beta-N-acetylglucosaminyl)-L-asparaginase (346 aa).

Residues 1–23 form the signal peptide; it reads MARKSNLPVLLVPFLLCQALVRC. Ser24 bears the Blocked amino end (Ser) mark. Asn38 carries an N-linked (GlcNAc...) asparagine glycan. 2 disulfides stabilise this stretch: Cys64-Cys69 and Cys163-Cys179. Thr206 acts as the Nucleophile in catalysis. Residues 234-237 and 257-260 contribute to the substrate site; these read RVGD and TGNG. An intrachain disulfide couples Cys286 to Cys306. N-linked (GlcNAc...) asparagine glycosylation is present at Asn308. Cys317 and Cys345 are joined by a disulfide.

It belongs to the Ntn-hydrolase family. As to quaternary structure, heterotetramer of two alpha and two beta chains arranged as a dimer of alpha/beta heterodimers. Post-translationally, cleaved into an alpha and beta chain by autocatalysis; this activates the enzyme. The N-terminal residue of the beta subunit is responsible for the nucleophile hydrolase activity. N-glycosylated.

It localises to the lysosome. It catalyses the reaction N(4)-(beta-N-acetyl-D-glucosaminyl)-L-asparagine + H2O = N-acetyl-beta-D-glucosaminylamine + L-aspartate + H(+). Its function is as follows. Cleaves the GlcNAc-Asn bond which joins oligosaccharides to the peptide of asparagine-linked glycoproteins. This Homo sapiens (Human) protein is N(4)-(beta-N-acetylglucosaminyl)-L-asparaginase (AGA).